The chain runs to 370 residues: Nociceptin receptor (370 aa).

At 1–48 (MESLFPAPFWEVLYGSPLQGNLSLLSPNHSLLPPHLLLNASHGAFLPL) the chain is on the extracellular side. Residues N21, N28, and N39 are each glycosylated (N-linked (GlcNAc...) asparagine). The helical transmembrane segment at 49 to 74 (GLKVTIVGLYLAVCVGGLLGNCLVMY) threads the bilayer. Over 75-87 (VILRHTKMKTATN) the chain is Cytoplasmic. The chain crosses the membrane as a helical span at residues 88-109 (IYIFNLALADTAVLLTLPFQGT). Residues 110–124 (DVLLGFWPFGNALCK) are Extracellular-facing. An intrachain disulfide couples C123 to C200. A helical membrane pass occupies residues 125–146 (AVIAIDYYNMFTSAFTLTAMSV). The Cytoplasmic segment spans residues 147–165 (DRYVAICHPIRALDVRTSS). Residues 166–188 (KAQAVNVAIWALASIVGVPVAIM) traverse the membrane as a helical segment. At 189–211 (GSAQVEDEEIECLVEIPAPQDYW) the chain is on the extracellular side. A helical membrane pass occupies residues 212-236 (GPVFAVCIFLFSFVIPVLIISVCYS). The Cytoplasmic segment spans residues 237–264 (LMVRRLRGVRLLSGSREKDRNLRRITRL). The helical transmembrane segment at 265–285 (VLVVVAVFVGCWTPVQVFVLV) threads the bilayer. Residues 286 to 300 (QGLGVQPGSETAVAV) are Extracellular-facing. Residues 301-322 (LRFCTALGYVNSCLNPILYAFL) traverse the membrane as a helical segment. The Cytoplasmic portion of the chain corresponds to 323–370 (DENFKACFRKFCCAPTRRREMQVSDRVRSIAKDVALACKTSETVPRPA). C334 is lipidated: S-palmitoyl cysteine.

Belongs to the G-protein coupled receptor 1 family. In terms of processing, phosphorylation at Ser-363 requires GRK3. Detected in brain cortex, stomach, ileum, jejunum and colon.

The protein resides in the cell membrane. Its subcellular location is the cytoplasmic vesicle. G-protein coupled opioid receptor that functions as a receptor for the endogenous neuropeptide nociceptin. Ligand binding causes a conformation change that triggers signaling via guanine nucleotide-binding proteins (G proteins) and modulates the activity of down-stream effectors. Signaling via G proteins mediates inhibition of adenylate cyclase activity and calcium channel activity. Arrestins modulate signaling via G proteins and mediate the activation of alternative signaling pathways that lead to the activation of MAP kinases. Plays a role in modulating nociception and the perception of pain. Plays a role in the regulation of locomotor activity by the neuropeptide nociceptin. This Sus scrofa (Pig) protein is Nociceptin receptor (OPRL1).